The chain runs to 490 residues: Glutamate--tRNA ligase (490 aa).

A 'HIGH' region motif is present at residues 13-23 (PSPTGTPHVGL). The 'KMSKS' region signature appears at 257-261 (KLSKR). An ATP-binding site is contributed by Lys260.

This sequence belongs to the class-I aminoacyl-tRNA synthetase family. Glutamate--tRNA ligase type 1 subfamily. As to quaternary structure, monomer.

It is found in the cytoplasm. It carries out the reaction tRNA(Glu) + L-glutamate + ATP = L-glutamyl-tRNA(Glu) + AMP + diphosphate. In terms of biological role, catalyzes the attachment of glutamate to tRNA(Glu) in a two-step reaction: glutamate is first activated by ATP to form Glu-AMP and then transferred to the acceptor end of tRNA(Glu). The protein is Glutamate--tRNA ligase of Mycobacterium tuberculosis (strain ATCC 25177 / H37Ra).